Reading from the N-terminus, the 134-residue chain is Small ribosomal subunit protein uS8c (134 aa).

It belongs to the universal ribosomal protein uS8 family. As to quaternary structure, part of the 30S ribosomal subunit.

It is found in the plastid. The protein localises to the chloroplast. One of the primary rRNA binding proteins, it binds directly to 16S rRNA central domain where it helps coordinate assembly of the platform of the 30S subunit. The protein is Small ribosomal subunit protein uS8c (rps8) of Chloranthus spicatus (Chulantree).